The chain runs to 439 residues: GlutamylGlutaminyl-tRNA synthetase (439 aa).

Positions proline 6–asparagine 16 match the 'HIGH' region motif. Positions lysine 232–arginine 236 match the 'KMSKS' region motif. Lysine 235 lines the ATP pocket.

Belongs to the class-I aminoacyl-tRNA synthetase family. Glutamate--tRNA ligase type 1 subfamily. Monomer.

It localises to the cytoplasm. The catalysed reaction is tRNA(Glu) + L-glutamate + ATP = L-glutamyl-tRNA(Gln) + AMP + diphosphate. In terms of biological role, aminoacylates tRNA(Gln) with glutamate. Does not aminoacylate tRNA(Glu). The polypeptide is GlutamylGlutaminyl-tRNA synthetase (gltX2) (Helicobacter pylori (strain ATCC 700392 / 26695) (Campylobacter pylori)).